The chain runs to 410 residues: Lissencephaly-1 homolog (410 aa).

One can recognise a LisH domain in the interval 7–39 (QRDELNRAIADYLRSNGYEEAYSVFKKEAELDM). Positions 56-82 (TSVIRLQKKVMELESKLNEAKEEFTSG) form a coiled coil. 7 WD repeats span residues 106–147 (GHRS…RTLK), 148–189 (GHTD…RTMH), 190–229 (GHDH…CVKT), 232–271 (GHRE…CKAE), 274–333 (EHEH…CLMT), 336–377 (GHDN…KTLN), and 379–410 (HEHF…WECR).

The protein belongs to the WD repeat LIS1/nudF family. In terms of assembly, can self-associate. Component of the cytosolic PAF-AH (I) heterotetrameric enzyme, which is composed of PAFAH1B1 (beta), PAFAH1B2 (alpha2) and PAFAH1B3 (alpha1) subunits. The catalytic activity of the enzyme resides in the alpha1 (PAFAH1B3) and alpha2 (PAFAH1B2) subunits, whereas the beta subunit (PAFAH1B1) has regulatory activity. Trimer formation is not essential for the catalytic activity. Interacts with dynein, dynactin, nde1 and ndel1.

Its subcellular location is the cytoplasm. It localises to the cytoskeleton. The protein localises to the microtubule organizing center. The protein resides in the centrosome. In terms of biological role, regulatory subunit (beta subunit) of the cytosolic type I platelet-activating factor (PAF) acetylhydrolase (PAF-AH (I)), an enzyme that catalyzes the hydrolyze of the acetyl group at the sn-2 position of PAF and its analogs and participates in PAF inactivation. Regulates the PAF-AH (I) activity in a catalytic dimer composition-dependent manner. Positively regulates the activity of the minus-end directed microtubule motor protein dynein. May enhance dynein-mediated microtubule sliding by targeting dynein to the microtubule plus end. Required for several dynein- and microtubule-dependent processes such as the maintenance of Golgi integrity, the peripheral transport of microtubule fragments and the coupling of the nucleus and centrosome. May be required for proliferation of neuronal precursors and neuronal migration. The protein is Lissencephaly-1 homolog (pafah1b1) of Xenopus laevis (African clawed frog).